Here is a 547-residue protein sequence, read N- to C-terminus: Kelch repeat and BTB domain-containing protein 2 (547 aa).

The BTB domain occupies 20 to 89; that stretch reads CDVIITIGDG…LYNRHISSMN (70 aa). Kelch repeat units lie at residues 295–342, 343–389, and 391–454; these read DIII…VIDD, TIYA…VLDQ, and IYII…SHKD.

In terms of assembly, interacts (via BTB domain) with host CUL3.

The protein resides in the host cytoplasm. Probable substrate-specific adapter of CUL3-containing E3 ubiquitin-protein ligases which mediate the ubiquitination and subsequent proteasomal degradation of host target proteins. The protein is Kelch repeat and BTB domain-containing protein 2 (KBTB2) of Bos taurus (Bovine).